The primary structure comprises 104 residues: MKFRPLHDRVVVRRLNAEEKTAGGIIIPDTAKEKPMEGEVIAVGPGARNEAGAVVALDVKAGDRILFGKWSGTEVKIDGEELLIMKESDIMGIIEGTASKKKAA.

It belongs to the GroES chaperonin family. Heptamer of 7 subunits arranged in a ring. Interacts with the chaperonin GroEL.

The protein localises to the cytoplasm. In terms of biological role, together with the chaperonin GroEL, plays an essential role in assisting protein folding. The GroEL-GroES system forms a nano-cage that allows encapsulation of the non-native substrate proteins and provides a physical environment optimized to promote and accelerate protein folding. GroES binds to the apical surface of the GroEL ring, thereby capping the opening of the GroEL channel. In Acidiphilium cryptum (strain JF-5), this protein is Co-chaperonin GroES.